The chain runs to 569 residues: GATOR1 complex protein NPRL3 (569 aa).

2 disordered regions span residues 27–60 (PFQRSQEHPASQTSKPRSRYAASNTGDHADEQDG) and 416–477 (PSEE…GDSP). Composition is skewed to polar residues over residues 34-52 (HPASQTSKPRSRYAASNTG) and 438-468 (SLSTPNALSFGSPTSSDDMTLTSPSMDNSSA). The residue at position 476 (S476) is a Phosphoserine.

Belongs to the NPR3 family. Within the GATOR complex, component of the GATOR1 subcomplex, made of DEPDC5, NPRL2 and NPRL3. GATOR1 mediates the strong interaction of the GATOR complex with small GTPases Rag (RagA/RRAGA, RagB/RRAGB, RagC/RRAGC and/or RagD/RRAGD) heterodimers. GATOR1 interacts with GPR155/LYCHOS; interaction takes place in presence of cholesterol and prevents interaction between GATOR1 and KICSTOR. As to expression, widely expressed. Expressed in the frontal lobe cortex as well as in the temporal, parietal, and occipital lobes.

Its subcellular location is the lysosome membrane. In terms of biological role, as a component of the GATOR1 complex functions as an inhibitor of the amino acid-sensing branch of the mTORC1 pathway. In response to amino acid depletion, the GATOR1 complex has GTPase activating protein (GAP) activity and strongly increases GTP hydrolysis by RagA/RRAGA (or RagB/RRAGB) within heterodimeric Rag complexes, thereby turning them into their inactive GDP-bound form, releasing mTORC1 from lysosomal surface and inhibiting mTORC1 signaling. In the presence of abundant amino acids, the GATOR1 complex is negatively regulated by GATOR2, the other GATOR subcomplex, in this amino acid-sensing branch of the TORC1 pathway. The chain is GATOR1 complex protein NPRL3 from Homo sapiens (Human).